Here is a 261-residue protein sequence, read N- to C-terminus: N-acetyltransferase ECO1 (261 aa).

A CCHH-type zinc finger spans residues 29–53 (LKCPKCEMKYSPNSIDDVATHKKYH). The N-acetyltransferase domain maps to 102–261 (VMIQENKPAE…SGHILIPCYL (160 aa)).

Belongs to the acetyltransferase family. ECO subfamily.

The protein resides in the nucleus. In terms of biological role, probable acetyltransferase required for the establishment of sister chromatid cohesion and couple the processes of cohesion and DNA replication to ensure that only sister chromatids become paired together. In contrast to the structural cohesins, the deposition and establishment factors are required only during S phase. Acts by acetylating the cohesin complex component SMC3. This Candida glabrata (strain ATCC 2001 / BCRC 20586 / JCM 3761 / NBRC 0622 / NRRL Y-65 / CBS 138) (Yeast) protein is N-acetyltransferase ECO1 (ECO1).